A 561-amino-acid chain; its full sequence is Acylcarnitine hydrolase (561 aa).

The signal sequence occupies residues Met-1–Gly-26. An intrachain disulfide couples Cys-97 to Cys-125. Ser-230 serves as the catalytic Acyl-ester intermediate. Cys-282 and Cys-293 are disulfide-bonded. Residues Glu-347 and His-459 each act as charge relay system in the active site. Positions His-558–Leu-561 match the Prevents secretion from ER motif.

This sequence belongs to the type-B carboxylesterase/lipase family. Detected in liver (at protein level).

Its subcellular location is the microsome. The protein resides in the endoplasmic reticulum. It carries out the reaction an O-acyl-(R)-carnitine + H2O = (R)-carnitine + a fatty acid + H(+). It catalyses the reaction all-trans-retinyl hexadecanoate + H2O = all-trans-retinol + hexadecanoate + H(+). Its function is as follows. Hydrolase with high activity towards palmitoylcarnitine. Is also active with p-nitrophenylacetate and alpha-naphthylacetate. May also hydrolyze retinyl esters. This chain is Acylcarnitine hydrolase, found in Mus musculus (Mouse).